The following is a 164-amino-acid chain: UPF0304 protein PM1500 (164 aa).

Belongs to the UPF0304 family.

The protein is UPF0304 protein PM1500 of Pasteurella multocida (strain Pm70).